The following is a 458-amino-acid chain: Ribulose bisphosphate carboxylase (458 aa).

Residue asparagine 111 coordinates substrate. The active-site Proton acceptor is the lysine 166. Substrate is bound at residue lysine 168. Mg(2+) is bound by residues lysine 191, aspartate 193, and glutamate 194. Lysine 191 is modified (N6-carboxylysine). Histidine 287 functions as the Proton acceptor in the catalytic mechanism. The substrate site is built by arginine 288, histidine 321, and serine 368.

It belongs to the RuBisCO large chain family. Type II subfamily. As to quaternary structure, homodimer. Mg(2+) serves as cofactor.

It catalyses the reaction 2 (2R)-3-phosphoglycerate + 2 H(+) = D-ribulose 1,5-bisphosphate + CO2 + H2O. It carries out the reaction D-ribulose 1,5-bisphosphate + O2 = 2-phosphoglycolate + (2R)-3-phosphoglycerate + 2 H(+). In terms of biological role, ruBisCO catalyzes two reactions: the carboxylation of D-ribulose 1,5-bisphosphate, the primary event in carbon dioxide fixation, as well as the oxidative fragmentation of the pentose substrate. Both reactions occur simultaneously and in competition at the same active site. The protein is Ribulose bisphosphate carboxylase (cbbM) of Rhodobacter capsulatus (strain ATCC BAA-309 / NBRC 16581 / SB1003).